The primary structure comprises 314 residues: Methionyl-tRNA formyltransferase (314 aa).

Position 113-116 (113-116 (SLLP)) interacts with (6S)-5,6,7,8-tetrahydrofolate.

It belongs to the Fmt family.

It carries out the reaction L-methionyl-tRNA(fMet) + (6R)-10-formyltetrahydrofolate = N-formyl-L-methionyl-tRNA(fMet) + (6S)-5,6,7,8-tetrahydrofolate + H(+). Its function is as follows. Attaches a formyl group to the free amino group of methionyl-tRNA(fMet). The formyl group appears to play a dual role in the initiator identity of N-formylmethionyl-tRNA by promoting its recognition by IF2 and preventing the misappropriation of this tRNA by the elongation apparatus. This Pseudomonas syringae pv. tomato (strain ATCC BAA-871 / DC3000) protein is Methionyl-tRNA formyltransferase.